The primary structure comprises 549 residues: Glucose-6-phosphate isomerase (549 aa).

An N6-acetyllysine mark is found at lysine 80, lysine 228, and lysine 234. Glutamate 355 (proton donor) is an active-site residue. Residues histidine 386 and lysine 514 contribute to the active site.

It belongs to the GPI family.

Its subcellular location is the cytoplasm. The catalysed reaction is alpha-D-glucose 6-phosphate = beta-D-fructose 6-phosphate. It functions in the pathway carbohydrate biosynthesis; gluconeogenesis. Its pathway is carbohydrate degradation; glycolysis; D-glyceraldehyde 3-phosphate and glycerone phosphate from D-glucose: step 2/4. Functionally, catalyzes the reversible isomerization of glucose-6-phosphate to fructose-6-phosphate. The sequence is that of Glucose-6-phosphate isomerase from Escherichia fergusonii (strain ATCC 35469 / DSM 13698 / CCUG 18766 / IAM 14443 / JCM 21226 / LMG 7866 / NBRC 102419 / NCTC 12128 / CDC 0568-73).